The sequence spans 287 residues: Glutamate racemase (287 aa).

The segment covering 1–15 (MATKPQDANTTSREA) has biased composition (polar residues). Residues 1–25 (MATKPQDANTTSREAITSKADSPPR) form a disordered region. Substrate is bound by residues 32–33 (DS) and 64–65 (YG). Residue Cys-96 is the Proton donor/acceptor of the active site. Substrate is bound at residue 97–98 (NT). Cys-208 (proton donor/acceptor) is an active-site residue. A substrate-binding site is contributed by 209-210 (TH).

This sequence belongs to the aspartate/glutamate racemases family.

It catalyses the reaction L-glutamate = D-glutamate. The protein operates within cell wall biogenesis; peptidoglycan biosynthesis. Provides the (R)-glutamate required for cell wall biosynthesis. This Yersinia pseudotuberculosis serotype I (strain IP32953) protein is Glutamate racemase.